A 186-amino-acid chain; its full sequence is dCTP deaminase (186 aa).

Residue 106–111 coordinates dCTP; sequence KSTYAR. Glu132 serves as the catalytic Proton donor/acceptor. Positions 151, 166, and 176 each coordinate dCTP.

This sequence belongs to the dCTP deaminase family. As to quaternary structure, homotrimer.

The enzyme catalyses dCTP + H2O + H(+) = dUTP + NH4(+). It participates in pyrimidine metabolism; dUMP biosynthesis; dUMP from dCTP (dUTP route): step 1/2. Catalyzes the deamination of dCTP to dUTP. This is dCTP deaminase from Nautilia profundicola (strain ATCC BAA-1463 / DSM 18972 / AmH).